A 67-amino-acid chain; its full sequence is uncharacterized protein (67 aa).

This is an uncharacterized protein from Saccharomyces cerevisiae (strain ATCC 204508 / S288c) (Baker's yeast).